A 69-amino-acid chain; its full sequence is Protein SlyX homolog (69 aa).

The protein belongs to the SlyX family.

This chain is Protein SlyX homolog, found in Pseudomonas aeruginosa (strain LESB58).